Consider the following 459-residue polypeptide: Sperm microtubule associated protein 2-like (459 aa).

The disordered stretch occupies residues 1–138 (MEEGDFSGSS…QEDGKDDLFP (138 aa)). Residues 21–30 (TTTTTETRTT) are compositionally biased toward low complexity. Positions 47–63 (NGDEAEAVGEEGQEEDY) are enriched in acidic residues. A compositionally biased stretch (basic and acidic residues) spans 64–73 (EGSKTHKSHE). Polar residues predominate over residues 77–87 (SFRSHNSSDPP). Composition is skewed to basic and acidic residues over residues 91–112 (KASD…KTSD) and 127–136 (ERQEDGKDDL). THEG repeat units follow at residues 172–190 (KKCF…PKKQ), 212–231 (AALK…PRLV), 258–277 (PALV…PNKF), 291–310 (TTRY…AKGT), 327–346 (STLS…PRIK), 367–386 (AALL…SKRV), 403–422 (AATH…PHTR), and 440–459 (SALK…PIVR).

This Mus musculus (Mouse) protein is Sperm microtubule associated protein 2-like.